Reading from the N-terminus, the 1188-residue chain is DNA-directed RNA polymerase subunit beta (1188 aa).

This sequence belongs to the RNA polymerase beta chain family. In terms of assembly, the RNAP catalytic core consists of 2 alpha, 1 beta, 1 beta' and 1 omega subunit. When a sigma factor is associated with the core the holoenzyme is formed, which can initiate transcription.

The enzyme catalyses RNA(n) + a ribonucleoside 5'-triphosphate = RNA(n+1) + diphosphate. DNA-dependent RNA polymerase catalyzes the transcription of DNA into RNA using the four ribonucleoside triphosphates as substrates. This Streptococcus pyogenes serotype M3 (strain ATCC BAA-595 / MGAS315) protein is DNA-directed RNA polymerase subunit beta.